We begin with the raw amino-acid sequence, 251 residues long: GTP cyclohydrolase 1 type 2 homolog (251 aa).

A divalent metal cation contacts are provided by histidine 64, histidine 65, aspartate 102, histidine 219, and glutamate 223.

The protein belongs to the GTP cyclohydrolase I type 2/NIF3 family. As to quaternary structure, homohexamer.

This Chlamydia muridarum (strain MoPn / Nigg) protein is GTP cyclohydrolase 1 type 2 homolog.